We begin with the raw amino-acid sequence, 937 residues long: Isoleucine--tRNA ligase (937 aa).

The 'HIGH' region signature appears at 58–68; that stretch reads PYANGDIHIGH. Glu-561 contributes to the L-isoleucyl-5'-AMP binding site. The short motif at 602–606 is the 'KMSKS' region element; it reads KMSKS. Lys-605 serves as a coordination point for ATP. 4 residues coordinate Zn(2+): Cys-900, Cys-903, Cys-920, and Cys-923.

The protein belongs to the class-I aminoacyl-tRNA synthetase family. IleS type 1 subfamily. In terms of assembly, monomer. Zn(2+) is required as a cofactor.

Its subcellular location is the cytoplasm. It catalyses the reaction tRNA(Ile) + L-isoleucine + ATP = L-isoleucyl-tRNA(Ile) + AMP + diphosphate. Functionally, catalyzes the attachment of isoleucine to tRNA(Ile). As IleRS can inadvertently accommodate and process structurally similar amino acids such as valine, to avoid such errors it has two additional distinct tRNA(Ile)-dependent editing activities. One activity is designated as 'pretransfer' editing and involves the hydrolysis of activated Val-AMP. The other activity is designated 'posttransfer' editing and involves deacylation of mischarged Val-tRNA(Ile). This is Isoleucine--tRNA ligase from Alcanivorax borkumensis (strain ATCC 700651 / DSM 11573 / NCIMB 13689 / SK2).